Consider the following 340-residue polypeptide: Short-chain dehydrogenase/reductase ffsI (340 aa).

Residues L46, R71, D96, N123, Y211, and K215 each coordinate NADP(+). Catalysis depends on Y211, which acts as the Proton acceptor. K215 acts as the Lowers pKa of active site Tyr in catalysis.

It belongs to the short-chain dehydrogenases/reductases (SDR) family.

The protein operates within mycotoxin biosynthesis. Functionally, short-chain dehydrogenase/reductase; part of the gene cluster that mediates the biosynthesis of the cytotoxic leucine-containing cytochalasans, including aspochalasin C, aspochalasin E, TMC-169, flavichalasine F, aspergillin PZ, aspochalasin M and flavichalasine G. The first step in the pathway is catalyzed by the hybrid PKS-NRPS ffsA that utilizes 8 units of malonyl-CoA to iteratively assemble the octaketide chain before addition of L-leucine by the C-terminal NRPS modules. Because ffsA lacks a designated enoylreductase (ER) domain, the required activity is provided the enoyl reductase fssC. The methyltransferase (MT) domain of ffsA catalyzes the alpha-methylation at C10 and C14 using S-adenosyl-L-methionine as the methyl-donating cosubstrate. Reduction by the hydrolyase ffsE, followed by dehydration and intra-molecular Diels-Alder cyclization by the Diels-Alderase ffsF then yield the required isoindolone-fused macrocycle. A number of oxidative steps catalyzed by the tailoring cytochrome P450 monooxygenase ffsD, the FAD-linked oxidoreductase ffsJ and the short-chain dehydrogenase/reductase ffsI, are further required to afford the final products. The protein is Short-chain dehydrogenase/reductase ffsI of Aspergillus flavipes.